The primary structure comprises 387 residues: Succinate--CoA ligase [ADP-forming] subunit beta (387 aa).

The 237-residue stretch at 9–245 (KDLLESYGLK…KSQENAKELK (237 aa)) folds into the ATP-grasp domain. ATP is bound by residues Lys-46, 53 to 55 (GRG), Glu-100, Tyr-103, and Glu-108. Positions 200 and 214 each coordinate Mg(2+). Residues Asn-265 and 322 to 324 (GIV) each bind substrate.

The protein belongs to the succinate/malate CoA ligase beta subunit family. As to quaternary structure, heterotetramer of two alpha and two beta subunits. The cofactor is Mg(2+).

It catalyses the reaction succinate + ATP + CoA = succinyl-CoA + ADP + phosphate. It carries out the reaction GTP + succinate + CoA = succinyl-CoA + GDP + phosphate. The protein operates within carbohydrate metabolism; tricarboxylic acid cycle; succinate from succinyl-CoA (ligase route): step 1/1. Functionally, succinyl-CoA synthetase functions in the citric acid cycle (TCA), coupling the hydrolysis of succinyl-CoA to the synthesis of either ATP or GTP and thus represents the only step of substrate-level phosphorylation in the TCA. The beta subunit provides nucleotide specificity of the enzyme and binds the substrate succinate, while the binding sites for coenzyme A and phosphate are found in the alpha subunit. This Francisella tularensis subsp. holarctica (strain OSU18) protein is Succinate--CoA ligase [ADP-forming] subunit beta.